The chain runs to 99 residues: Plastocyanin (99 aa).

The 99-residue stretch at 1 to 99 (LDVLLGSDDG…AGMVGKVTVN (99 aa)) folds into the Plastocyanin-like domain. Cu cation is bound by residues histidine 37, cysteine 84, histidine 87, and methionine 92.

This sequence belongs to the plastocyanin family. Cu(2+) is required as a cofactor.

The protein localises to the plastid. The protein resides in the chloroplast thylakoid membrane. In terms of biological role, participates in electron transfer between P700 and the cytochrome b6-f complex in photosystem I. The polypeptide is Plastocyanin (PETE) (Mercurialis perennis (Dog's mercury)).